Here is a 75-residue protein sequence, read N- to C-terminus: Endogenous retrovirus group K member 10 Np9 protein (75 aa).

The disordered stretch occupies residues 21–43 (PTAPKRQRPSRTGHDDDGGFVEK). The segment covering 32–43 (TGHDDDGGFVEK) has biased composition (basic and acidic residues).

It localises to the nucleus. May possess a function in tumorigenesis. This is Endogenous retrovirus group K member 10 Np9 protein (ERVK-10) from Homo sapiens (Human).